We begin with the raw amino-acid sequence, 190 residues long: Orotate phosphoribosyltransferase (190 aa).

114–122 (EDVVTTGGS) lines the 5-phospho-alpha-D-ribose 1-diphosphate pocket. Orotate-binding residues include threonine 118 and arginine 146.

It belongs to the purine/pyrimidine phosphoribosyltransferase family. PyrE subfamily. Homodimer. Mg(2+) is required as a cofactor.

It carries out the reaction orotidine 5'-phosphate + diphosphate = orotate + 5-phospho-alpha-D-ribose 1-diphosphate. Its pathway is pyrimidine metabolism; UMP biosynthesis via de novo pathway; UMP from orotate: step 1/2. Its function is as follows. Catalyzes the transfer of a ribosyl phosphate group from 5-phosphoribose 1-diphosphate to orotate, leading to the formation of orotidine monophosphate (OMP). In Caldanaerobacter subterraneus subsp. tengcongensis (strain DSM 15242 / JCM 11007 / NBRC 100824 / MB4) (Thermoanaerobacter tengcongensis), this protein is Orotate phosphoribosyltransferase.